A 508-amino-acid chain; its full sequence is Dihydroniloticin synthase CYP71CD4 (508 aa).

Residues 6–26 (LDFFSVTSFIIFFLFLFRLVW) form a helical membrane-spanning segment. Cysteine 449 contacts heme.

The protein belongs to the cytochrome P450 family. Requires heme as cofactor. Mainly expressed in roots and, to a lesser extent, in stems.

It localises to the membrane. It catalyses the reaction tirucalla-7,24-dien-3beta-ol + 2 reduced [NADPH--hemoprotein reductase] + 2 O2 = dihydroniloticin + 2 oxidized [NADPH--hemoprotein reductase] + 2 H2O + 2 H(+). Its pathway is secondary metabolite biosynthesis; terpenoid biosynthesis. Functionally, monooxygenase involved in the biosynthesis of quassinoids triterpene natural products such as ailanthone, chaparrinone, glaucarubinone and amarolide, allelopathic degraded triterpene lactones inhibiting the growth of other plants, and possessing antimalarial, antifeedant, insecticidal, anti-inflammatory and anticancer activities. Catalyzes the conversion of tirucalladienol to dihydroniloticin. The polypeptide is Dihydroniloticin synthase CYP71CD4 (Ailanthus altissima (Tree-of-heaven)).